Reading from the N-terminus, the 374-residue chain is GTPase Obg (374 aa).

Residues 1–159 enclose the Obg domain; the sequence is MKFIDEVRIH…RDLRLELRLL (159 aa). Positions 160 to 333 constitute an OBG-type G domain; that stretch reads ADVGLLGLPN…LVYAIWQALP (174 aa). Residues 166 to 173, 191 to 195, 213 to 216, 283 to 286, and 314 to 316 contribute to the GTP site; these read GLPNAGKS, FTTLY, DIPG, NKSD, and SAA. Positions 173 and 193 each coordinate Mg(2+). The tract at residues 337–374 is disordered; sequence PAADPTQTEDWGDESDAGERLENWEGDDLDADWEEEQV. The span at 360 to 374 shows a compositional bias: acidic residues; the sequence is WEGDDLDADWEEEQV.

This sequence belongs to the TRAFAC class OBG-HflX-like GTPase superfamily. OBG GTPase family. In terms of assembly, monomer. Mg(2+) is required as a cofactor.

It localises to the cytoplasm. An essential GTPase which binds GTP, GDP and possibly (p)ppGpp with moderate affinity, with high nucleotide exchange rates and a fairly low GTP hydrolysis rate. Plays a role in control of the cell cycle, stress response, ribosome biogenesis and in those bacteria that undergo differentiation, in morphogenesis control. This is GTPase Obg from Acidithiobacillus ferrooxidans (strain ATCC 23270 / DSM 14882 / CIP 104768 / NCIMB 8455) (Ferrobacillus ferrooxidans (strain ATCC 23270)).